Here is a 504-residue protein sequence, read N- to C-terminus: Putative ribose/galactose/methyl galactoside import ATP-binding protein (504 aa).

2 ABC transporter domains span residues 5-242 and 252-497; these read ISVK…GRNL and TSAN…TRRE. 37–44 serves as a coordination point for ATP; that stretch reads GENGAGKS.

This sequence belongs to the ABC transporter superfamily. Carbohydrate importer 2 (CUT2) (TC 3.A.1.2) family.

It localises to the cell inner membrane. It carries out the reaction D-ribose(out) + ATP + H2O = D-ribose(in) + ADP + phosphate + H(+). It catalyses the reaction D-galactose(out) + ATP + H2O = D-galactose(in) + ADP + phosphate + H(+). Part of an ABC transporter complex involved in carbohydrate import. Could be involved in ribose, galactose and/or methyl galactoside import. Responsible for energy coupling to the transport system. This chain is Putative ribose/galactose/methyl galactoside import ATP-binding protein, found in Albidiferax ferrireducens (strain ATCC BAA-621 / DSM 15236 / T118) (Rhodoferax ferrireducens).